Consider the following 99-residue polypeptide: EPIDERMAL PATTERNING FACTOR-like protein 8 (99 aa).

An N-terminal signal peptide occupies residues 1–35 (MDSSRKYKRCGFGAALFVANIFFSLLSLHCISGAH). 3 cysteine pairs are disulfide-bonded: Cys-53/Cys-90, Cys-57/Cys-63, and Cys-60/Cys-92.

It belongs to the plant cysteine rich small secretory peptide family. Epidermal patterning factor subfamily.

The protein localises to the secreted. Its function is as follows. Controls stomatal patterning. In Arabidopsis thaliana (Mouse-ear cress), this protein is EPIDERMAL PATTERNING FACTOR-like protein 8.